The sequence spans 138 residues: Acidic phospholipase A2 daboiatoxin A chain (138 aa).

The first 16 residues, 1-16 (MRTLWIMAVCLIGVEG), serve as a signal peptide directing secretion. Cystine bridges form between cysteine 42/cysteine 131, cysteine 44/cysteine 60, cysteine 59/cysteine 111, cysteine 65/cysteine 138, cysteine 66/cysteine 104, cysteine 73/cysteine 97, and cysteine 91/cysteine 102. Tyrosine 43, glycine 45, and glycine 47 together coordinate Ca(2+). Histidine 63 is an active-site residue. Residue aspartate 64 participates in Ca(2+) binding. Residue aspartate 105 is part of the active site.

It belongs to the phospholipase A2 family. Group II subfamily. D49 sub-subfamily. As to quaternary structure, heterodimer of A and B chain; non-covalently linked. The acidic protein (B chain) has phospholipase A2 activity and the A chain weakly inhibits the B chain enzymatic activity but potentiates its lethal potency. Ca(2+) serves as cofactor. Expressed by the venom gland.

The protein resides in the secreted. It carries out the reaction a 1,2-diacyl-sn-glycero-3-phosphocholine + H2O = a 1-acyl-sn-glycero-3-phosphocholine + a fatty acid + H(+). In terms of biological role, heterodimer (A and B chains): phospholipase A2 that acts as a presynaptic neurotoxin and shows a PLA2 activity of 1377 umol/min/mg. In vivo, induces edema and produces neurotoxic symptoms in mice. Also exhibits indirect hemolysis, a strong myonecrotic activity and cytotoxicity. PLA2 catalyzes the calcium-dependent hydrolysis of the 2-acyl groups in 3-sn-phosphoglycerides. Functionally, monomer: Snake venom phospholipase A2 (PLA2) that shows a PLA2 activity of 578 umol/min/mg. The sequence is that of Acidic phospholipase A2 daboiatoxin A chain from Daboia siamensis (Eastern Russel's viper).